The primary structure comprises 437 residues: 3-phosphoshikimate 1-carboxyvinyltransferase (437 aa).

Positions 22, 23, and 27 each coordinate 3-phosphoshikimate. Residue K22 coordinates phosphoenolpyruvate. G96 and R125 together coordinate phosphoenolpyruvate. The 3-phosphoshikimate site is built by S170, Q172, D323, and K350. Residue Q172 coordinates phosphoenolpyruvate. D323 functions as the Proton acceptor in the catalytic mechanism. Phosphoenolpyruvate-binding residues include R354 and R396.

This sequence belongs to the EPSP synthase family. As to quaternary structure, monomer.

The protein localises to the cytoplasm. The catalysed reaction is 3-phosphoshikimate + phosphoenolpyruvate = 5-O-(1-carboxyvinyl)-3-phosphoshikimate + phosphate. It participates in metabolic intermediate biosynthesis; chorismate biosynthesis; chorismate from D-erythrose 4-phosphate and phosphoenolpyruvate: step 6/7. Functionally, catalyzes the transfer of the enolpyruvyl moiety of phosphoenolpyruvate (PEP) to the 5-hydroxyl of shikimate-3-phosphate (S3P) to produce enolpyruvyl shikimate-3-phosphate and inorganic phosphate. The polypeptide is 3-phosphoshikimate 1-carboxyvinyltransferase (Synechococcus sp. (strain RCC307)).